Consider the following 274-residue polypeptide: ATP synthase subunit a (274 aa).

The next 5 helical transmembrane spans lie at 43–63 (TLNI…LYVF), 103–123 (VIAP…VMDL), 144–164 (VVPT…FVLI), 223–243 (LIFI…LSLP), and 245–265 (AIFH…LTIV).

Belongs to the ATPase A chain family. In terms of assembly, F-type ATPases have 2 components, CF(1) - the catalytic core - and CF(0) - the membrane proton channel. CF(1) has five subunits: alpha(3), beta(3), gamma(1), delta(1), epsilon(1). CF(0) has three main subunits: a(1), b(2) and c(9-12). The alpha and beta chains form an alternating ring which encloses part of the gamma chain. CF(1) is attached to CF(0) by a central stalk formed by the gamma and epsilon chains, while a peripheral stalk is formed by the delta and b chains.

It localises to the cell inner membrane. In terms of biological role, key component of the proton channel; it plays a direct role in the translocation of protons across the membrane. The chain is ATP synthase subunit a from Photorhabdus laumondii subsp. laumondii (strain DSM 15139 / CIP 105565 / TT01) (Photorhabdus luminescens subsp. laumondii).